The primary structure comprises 20 residues: GMP synthase [glutamine-hydrolyzing] (20 aa).

Residues 1–20 (ALGDQLLSVFVDHTLVDEVA) form the GMPS ATP-PPase domain.

Homodimer.

It carries out the reaction XMP + L-glutamine + ATP + H2O = GMP + L-glutamate + AMP + diphosphate + 2 H(+). It functions in the pathway purine metabolism; GMP biosynthesis; GMP from XMP (L-Gln route): step 1/1. In terms of biological role, catalyzes the synthesis of GMP from XMP. The protein is GMP synthase [glutamine-hydrolyzing] (guaA) of Fructilactobacillus sanfranciscensis (Lactobacillus sanfranciscensis).